Here is a 60-residue protein sequence, read N- to C-terminus: MEAMKMKLYVVVLVAVIAFSTVHQTVAAVDAPAPSPTSDASSFIPTFFASVAVMAFGFFF.

The N-terminal stretch at 1-28 is a signal peptide; the sequence is MEAMKMKLYVVVLVAVIAFSTVHQTVAA. 4-hydroxyproline is present on residues Pro-32, Pro-34, and Pro-36. O-linked (Ara...) hydroxyproline glycans are attached at residues Pro-32, Pro-34, and Pro-36. Ser-38 carries the GPI-anchor amidated serine lipid modification. A propeptide spans 39–60 (removed in mature form); sequence DASSFIPTFFASVAVMAFGFFF.

Belongs to the AG-peptide AGP family. In terms of processing, contains 4-hydroxyproline; hydroxylated on Pro-32, Pro-34 and Pro-36. Post-translationally, O-glycosylated on hydroxyprolines; noncontiguous hydroxylproline residues are glycosylated with arabinogalactan.

Its subcellular location is the cell membrane. Proteoglycan that seems to be implicated in diverse developmental roles such as differentiation, cell-cell recognition, embryogenesis and programmed cell death. Involved in the regulation of root hair elongation. The chain is Arabinogalactan protein 14 from Arabidopsis thaliana (Mouse-ear cress).